The following is a 155-amino-acid chain: Small ribosomal subunit protein uS7 (155 aa).

The protein belongs to the universal ribosomal protein uS7 family. As to quaternary structure, part of the 30S ribosomal subunit. Contacts proteins S9 and S11.

In terms of biological role, one of the primary rRNA binding proteins, it binds directly to 16S rRNA where it nucleates assembly of the head domain of the 30S subunit. Is located at the subunit interface close to the decoding center, probably blocks exit of the E-site tRNA. This is Small ribosomal subunit protein uS7 from Chlorobium phaeovibrioides (strain DSM 265 / 1930) (Prosthecochloris vibrioformis (strain DSM 265)).